A 602-amino-acid polypeptide reads, in one-letter code: Cholinesterase (602 aa).

The first 28 residues, 1–28, serve as a signal peptide directing secretion; it reads MQSKGTIISIQFLLRFLLLWVLIGKSHT. N-linked (GlcNAc...) asparagine glycosylation occurs at N85. C93 and C120 are oxidised to a cystine. N-linked (GlcNAc...) asparagine glycosylation is present at N134. 144–145 provides a ligand contact to substrate; the sequence is GG. The active-site Acyl-ester intermediate is the S226. S226 carries the phosphoserine modification. N269 and N284 each carry an N-linked (GlcNAc...) asparagine glycan. An intrachain disulfide couples C280 to C291. The Charge relay system role is filled by E353. N369 carries an N-linked (GlcNAc...) asparagine glycan. A disulfide bond links C428 and C547. Residue H466 is the Charge relay system of the active site. N-linked (GlcNAc...) asparagine glycans are attached at residues N483, N509, N513, and N514.

The protein belongs to the type-B carboxylesterase/lipase family. Homotetramer; disulfide-linked. Dimer of dimers.

It is found in the secreted. It catalyses the reaction an acylcholine + H2O = a carboxylate + choline + H(+). Functionally, esterase with broad substrate specificity. Contributes to the inactivation of the neurotransmitter acetylcholine. Can degrade neurotoxic organophosphate esters. This Panthera tigris tigris (Bengal tiger) protein is Cholinesterase (BCHE).